The chain runs to 315 residues: Cysteine synthase (315 aa).

Residues Asn8 and Arg35 each contribute to the hydrogen sulfide site. At Lys42 the chain carries N6-(pyridoxal phosphate)lysine. Pyridoxal 5'-phosphate is bound by residues Asn72 and Gly177 to Thr181. Hydrogen sulfide is bound at residue Leu269. Ser273 lines the pyridoxal 5'-phosphate pocket.

The protein belongs to the cysteine synthase/cystathionine beta-synthase family. Homodimer. The cofactor is pyridoxal 5'-phosphate.

It catalyses the reaction O-acetyl-L-serine + hydrogen sulfide = L-cysteine + acetate. It functions in the pathway amino-acid biosynthesis; L-cysteine biosynthesis; L-cysteine from L-serine: step 2/2. The sequence is that of Cysteine synthase (cysK) from Buchnera aphidicola subsp. Acyrthosiphon pisum (strain APS) (Acyrthosiphon pisum symbiotic bacterium).